The chain runs to 926 residues: OTU domain-containing protein 7A (926 aa).

Serine 121 bears the Phosphoserine mark. The segment at 170 to 413 (ERDLIEQATM…AVDPGKDWEW (244 aa)) is TRAF-binding. Residues 185 to 452 (AGRLNWWSTV…VTWIRIPSET (268 aa)) are catalytic. Positions 201–377 (LLPLATTGDG…QAHFSALVSM (177 aa)) constitute an OTU domain. The active site involves aspartate 209. Cysteine 212 serves as the catalytic Nucleophile. The active-site Proton acceptor is histidine 370. 3 disordered regions span residues 455 to 517 (PLAQ…DSVA), 540 to 615 (GLVH…GDAW), and 671 to 779 (EQEQ…ARQS). A compositionally biased stretch (low complexity) spans 484 to 494 (VCSNSNSNNGK). The segment covering 495–513 (NGKDKEKEKQRKDKDKTRA) has biased composition (basic and acidic residues). The short motif at 497-512 (KDKEKEKQRKDKDKTR) is the Nuclear localization signal element. Low complexity-rich tracts occupy residues 579 to 595 (GASA…PSPT), 680 to 691 (AAAAAAATATAT), and 731 to 750 (SPGT…AASP). The segment covering 751-767 (GPGGGARRAAPGTGGPT) has biased composition (gly residues). Omega-N-methylarginine is present on arginine 880. The A20-type zinc finger occupies 884–919 (GPAQRRCQRENCAFYGRAETEHFCSYCYREELRRRR). 4 residues coordinate Zn(2+): cysteine 890, cysteine 895, cysteine 907, and cysteine 910.

It belongs to the peptidase C64 family.

Its subcellular location is the cytoplasm. The protein localises to the nucleus. It carries out the reaction Thiol-dependent hydrolysis of ester, thioester, amide, peptide and isopeptide bonds formed by the C-terminal Gly of ubiquitin (a 76-residue protein attached to proteins as an intracellular targeting signal).. Its function is as follows. Deubiquitinase, which cleaves 'Lys-11'-linked polyubiquitin chains. The sequence is that of OTU domain-containing protein 7A (Otud7a) from Mus musculus (Mouse).